We begin with the raw amino-acid sequence, 85 residues long: MAKSLTAAELRGYSVKELTEKLKEAKEELFNLRFQAATGQLDNNSRLRIVKREIARIYTVLREHELGIMPLAAEESADKAKEAAE.

This sequence belongs to the universal ribosomal protein uL29 family.

The protein is Large ribosomal subunit protein uL29 of Thermobifida fusca (strain YX).